The sequence spans 185 residues: uncharacterized protein (185 aa).

4 helical membrane passes run 5–25 (SFLI…RIWL), 63–83 (LATV…LILI), 97–117 (FLGL…VLLI), and 149–169 (IIPA…GLQF).

The protein belongs to the YggT family.

The protein localises to the cell membrane. This is an uncharacterized protein from Vibrio alginolyticus.